Consider the following 146-residue polypeptide: Flagellar assembly factor FliW (146 aa).

It belongs to the FliW family. Interacts with translational regulator CsrA and flagellin(s).

The protein resides in the cytoplasm. Acts as an anti-CsrA protein, binds CsrA and prevents it from repressing translation of its target genes, one of which is flagellin. Binds to flagellin and participates in the assembly of the flagellum. In Shouchella clausii (strain KSM-K16) (Alkalihalobacillus clausii), this protein is Flagellar assembly factor FliW.